Consider the following 416-residue polypeptide: Serine hydroxymethyltransferase (416 aa).

(6S)-5,6,7,8-tetrahydrofolate is bound by residues L121 and 125–127 (GHL). K229 bears the N6-(pyridoxal phosphate)lysine mark.

This sequence belongs to the SHMT family. In terms of assembly, homodimer. Requires pyridoxal 5'-phosphate as cofactor.

The protein resides in the cytoplasm. It carries out the reaction (6R)-5,10-methylene-5,6,7,8-tetrahydrofolate + glycine + H2O = (6S)-5,6,7,8-tetrahydrofolate + L-serine. The protein operates within one-carbon metabolism; tetrahydrofolate interconversion. Its pathway is amino-acid biosynthesis; glycine biosynthesis; glycine from L-serine: step 1/1. Catalyzes the reversible interconversion of serine and glycine with tetrahydrofolate (THF) serving as the one-carbon carrier. This reaction serves as the major source of one-carbon groups required for the biosynthesis of purines, thymidylate, methionine, and other important biomolecules. Also exhibits THF-independent aldolase activity toward beta-hydroxyamino acids, producing glycine and aldehydes, via a retro-aldol mechanism. The sequence is that of Serine hydroxymethyltransferase from Neisseria meningitidis serogroup C / serotype 2a (strain ATCC 700532 / DSM 15464 / FAM18).